A 249-amino-acid polypeptide reads, in one-letter code: 5-amino-6-(5-phospho-D-ribitylamino)uracil phosphatase YcsE (249 aa).

Asp-16 (nucleophile) is an active-site residue. Position 16 (Asp-16) interacts with Mg(2+). Met-17 serves as a coordination point for phosphate. Asp-18 is a Mg(2+) binding site. Phosphate-binding positions include 50-51 and Lys-177; that span reads TG. Positions 200 and 201 each coordinate Mg(2+). Asn-203 lines the phosphate pocket.

Belongs to the HAD-like hydrolase superfamily. Cof family. Mg(2+) is required as a cofactor.

It carries out the reaction 5-amino-6-(5-phospho-D-ribitylamino)uracil + H2O = 5-amino-6-(D-ribitylamino)uracil + phosphate. Its pathway is cofactor biosynthesis; riboflavin biosynthesis; 5-amino-6-(D-ribitylamino)uracil from GTP: step 4/4. In terms of biological role, catalyzes the dephosphorylation of the riboflavin precursor 5-amino-6-(5-phospho-D-ribitylamino)uracil and of flavin mononucleotide (FMN) in vitro. To a lesser extent, may also catalyze the dephosphorylation of a broad range of substrates such as phosphorylated sugars and triphosphate nucleotides in vitro. The polypeptide is 5-amino-6-(5-phospho-D-ribitylamino)uracil phosphatase YcsE (ycsE) (Bacillus subtilis (strain 168)).